Consider the following 186-residue polypeptide: ATP synthase subunit delta (186 aa).

It belongs to the ATPase delta chain family. In terms of assembly, F-type ATPases have 2 components, F(1) - the catalytic core - and F(0) - the membrane proton channel. F(1) has five subunits: alpha(3), beta(3), gamma(1), delta(1), epsilon(1). F(0) has three main subunits: a(1), b(2) and c(10-14). The alpha and beta chains form an alternating ring which encloses part of the gamma chain. F(1) is attached to F(0) by a central stalk formed by the gamma and epsilon chains, while a peripheral stalk is formed by the delta and b chains.

It localises to the cell inner membrane. F(1)F(0) ATP synthase produces ATP from ADP in the presence of a proton or sodium gradient. F-type ATPases consist of two structural domains, F(1) containing the extramembraneous catalytic core and F(0) containing the membrane proton channel, linked together by a central stalk and a peripheral stalk. During catalysis, ATP synthesis in the catalytic domain of F(1) is coupled via a rotary mechanism of the central stalk subunits to proton translocation. Functionally, this protein is part of the stalk that links CF(0) to CF(1). It either transmits conformational changes from CF(0) to CF(1) or is implicated in proton conduction. This Brucella anthropi (strain ATCC 49188 / DSM 6882 / CCUG 24695 / JCM 21032 / LMG 3331 / NBRC 15819 / NCTC 12168 / Alc 37) (Ochrobactrum anthropi) protein is ATP synthase subunit delta.